The chain runs to 202 residues: Diadenylate cyclase (202 aa).

The chain crosses the membrane as a helical span at residues 6 to 26 (VFSVIILVLLFLILALTLLFV). A DAC domain is found at 29 to 185 (NKRTRSFVIR…RGVIKTLSSN (157 aa)).

It belongs to the adenylate cyclase family. DacB/CdaS subfamily. As to quaternary structure, probably oligomerizes.

Its subcellular location is the cell membrane. It catalyses the reaction 2 ATP = 3',3'-c-di-AMP + 2 diphosphate. Catalyzes the condensation of 2 ATP molecules into cyclic di-AMP (c-di-AMP), a second messenger used to regulate differing processes in different bacteria. This chain is Diadenylate cyclase, found in Mycoplasma pneumoniae (strain ATCC 29342 / M129 / Subtype 1) (Mycoplasmoides pneumoniae).